We begin with the raw amino-acid sequence, 338 residues long: Ketol-acid reductoisomerase (NADP(+)) (338 aa).

Residues 1 to 181 (MKVFYDKDAD…GGGRAGIIET (181 aa)) enclose the KARI N-terminal Rossmann domain. NADP(+) is bound by residues 24–27 (YGSQ), Arg-47, and Ser-52. Residue His-107 is part of the active site. Gly-133 is a binding site for NADP(+). The KARI C-terminal knotted domain maps to 182-327 (NFREETETDL…AKLRAMMPWI (146 aa)). 4 residues coordinate Mg(2+): Asp-190, Glu-194, Glu-226, and Glu-230. Substrate is bound at residue Ser-251.

Belongs to the ketol-acid reductoisomerase family. Mg(2+) is required as a cofactor.

The catalysed reaction is (2R)-2,3-dihydroxy-3-methylbutanoate + NADP(+) = (2S)-2-acetolactate + NADPH + H(+). It catalyses the reaction (2R,3R)-2,3-dihydroxy-3-methylpentanoate + NADP(+) = (S)-2-ethyl-2-hydroxy-3-oxobutanoate + NADPH + H(+). The protein operates within amino-acid biosynthesis; L-isoleucine biosynthesis; L-isoleucine from 2-oxobutanoate: step 2/4. It functions in the pathway amino-acid biosynthesis; L-valine biosynthesis; L-valine from pyruvate: step 2/4. In terms of biological role, involved in the biosynthesis of branched-chain amino acids (BCAA). Catalyzes an alkyl-migration followed by a ketol-acid reduction of (S)-2-acetolactate (S2AL) to yield (R)-2,3-dihydroxy-isovalerate. In the isomerase reaction, S2AL is rearranged via a Mg-dependent methyl migration to produce 3-hydroxy-3-methyl-2-ketobutyrate (HMKB). In the reductase reaction, this 2-ketoacid undergoes a metal-dependent reduction by NADPH to yield (R)-2,3-dihydroxy-isovalerate. This chain is Ketol-acid reductoisomerase (NADP(+)), found in Polynucleobacter asymbioticus (strain DSM 18221 / CIP 109841 / QLW-P1DMWA-1) (Polynucleobacter necessarius subsp. asymbioticus).